Reading from the N-terminus, the 329-residue chain is Short-chain dehydrogenase/reductase prx4 (329 aa).

3 residues coordinate NADP(+): Ser58, Ile60, and Asn81. Residue Asn91 is glycosylated (N-linked (GlcNAc...) asparagine). The NADP(+) site is built by Asp98, Asn121, Lys161, Tyr194, Lys198, and Thr229. Residue Tyr194 is the Proton acceptor of the active site. Catalysis depends on Lys198, which acts as the Lowers pKa of active site Tyr. Residues Gly238–Val258 traverse the membrane as a helical segment.

This sequence belongs to the short-chain dehydrogenases/reductases (SDR) family.

The protein resides in the membrane. The protein operates within sesquiterpene biosynthesis. Functionally, short-chain dehydrogenase/reductase; part of the gene cluster that mediates the biosynthesis of PR-toxin, a bicyclic sesquiterpene belonging to the eremophilane class and acting as a mycotoxin. The first step of the pathway is catalyzed by the aristolochene synthase which performs the cyclization of trans,trans-farnesyl diphosphate (FPP) to the bicyclic sesquiterpene aristolochene. Following the formation of aristolochene, the non-oxygenated aristolochene is converted to the trioxygenated intermediate eremofortin B, via 7-epi-neopetasone. This conversion appears to involve three enzymes, a hydroxysterol oxidase-like enzyme, the quinone-oxidase prx3 that forms the quinone-type-structure in the bicyclic nucleus of aristolochene with the C8-oxo group and the C-3 hydroxyl group, and the P450 monooxygenase ORF6 that introduces the epoxide at the double bond between carbons 1 and 2. No monoxy or dioxy-intermediates have been reported to be released to the broth, so these three early oxidative reactions may be coupled together. Eremofortin B is further oxidized by another P450 monooxygenase, that introduces a second epoxide between carbons 7 and 11 prior to acetylation to eremofortin A by the acetyltransferase ORF8. The second epoxidation may be performed by a second P450 monooxygenase. After the acetylation step, eremofortin A is converted to eremofortin C and then to PR-toxin. First the conversion of eremofortin A to eremofortin C proceeds by oxidation of the side chain of the molecule at C-12 and is catalyzed by the short-chain oxidoreductase prx1. The cytochrome P450 monooxygenase ORF6 is probably also involved in this step. The primary alcohol formed at C-12 is finally oxidized by the short-chain alcohol dehydrogenase prx4 that forms PR-toxin. The sequence is that of Short-chain dehydrogenase/reductase prx4 from Penicillium roqueforti.